Here is a 250-residue protein sequence, read N- to C-terminus: Corrinoid adenosyltransferase MMAB (250 aa).

A mitochondrion-targeting transit peptide spans 1-32; that stretch reads MAVCGLGSRLGLGSRLGLRGCFGAARLLYPRF. Residues 34-59 form a disordered region; the sequence is SRGPQGVEDGDRPQPSSKTPRIPKIY. Residues 60 to 63, 68 to 69, and Lys-78 each bind ATP; these read TKTG and SS. Phosphoserine is present on Ser-134. 190-194 serves as a coordination point for ATP; that stretch reads RRAER. Position 211 is an N6-succinyllysine (Lys-211). Asn-214 contributes to the ATP binding site. Residue Lys-230 is modified to N6-acetyllysine; alternate. Lys-230 carries the post-translational modification N6-succinyllysine; alternate.

Belongs to the Cob(I)alamin adenosyltransferase family. Homotrimer. As to expression, expressed in liver and skeletal muscle.

It is found in the mitochondrion. It carries out the reaction cob(I)alamin-[corrinoid adenosyltransferase] + ATP = apo-[corrinoid adenosyltransferase] + adenosylcob(III)alamin + triphosphate. Converts cob(I)alamin to adenosylcobalamin (adenosylcob(III)alamin), a coenzyme for methylmalonyl-CoA mutase, therefore participates in the final step of the vitamin B12 conversion. Generates adenosylcobalamin (AdoCbl) and directly delivers the cofactor to MUT in a transfer that is stimulated by ATP-binding to MMAB and gated by MMAA. This is Corrinoid adenosyltransferase MMAB from Homo sapiens (Human).